Here is a 467-residue protein sequence, read N- to C-terminus: Uronate isomerase (467 aa).

It belongs to the metallo-dependent hydrolases superfamily. Uronate isomerase family.

It carries out the reaction D-glucuronate = D-fructuronate. The enzyme catalyses aldehydo-D-galacturonate = keto-D-tagaturonate. The protein operates within carbohydrate metabolism; pentose and glucuronate interconversion. This chain is Uronate isomerase, found in Geobacillus thermodenitrificans (strain NG80-2).